The sequence spans 166 residues: Urease accessory protein UreE (166 aa).

A disordered region spans residues glutamate 135–glycine 156.

This sequence belongs to the UreE family.

The protein localises to the cytoplasm. Involved in urease metallocenter assembly. Binds nickel. Probably functions as a nickel donor during metallocenter assembly. The chain is Urease accessory protein UreE from Ectopseudomonas mendocina (strain ymp) (Pseudomonas mendocina).